Consider the following 446-residue polypeptide: Glutamyl-tRNA reductase 2 (446 aa).

Substrate-binding positions include 53 to 56 (TCNR), Ser-105, 110 to 112 (EQQ), and Gln-116. Catalysis depends on Cys-54, which acts as the Nucleophile. 185-190 (GAGKMG) provides a ligand contact to NADP(+). Positions 409 to 446 (AAELFGIENETAGGERREGGAEGAAAAPGAGPVRSQGT) are disordered. The segment covering 431 to 440 (GAAAAPGAGP) has biased composition (low complexity).

Belongs to the glutamyl-tRNA reductase family. As to quaternary structure, homodimer.

The enzyme catalyses (S)-4-amino-5-oxopentanoate + tRNA(Glu) + NADP(+) = L-glutamyl-tRNA(Glu) + NADPH + H(+). The protein operates within porphyrin-containing compound metabolism; protoporphyrin-IX biosynthesis; 5-aminolevulinate from L-glutamyl-tRNA(Glu): step 1/2. In terms of biological role, catalyzes the NADPH-dependent reduction of glutamyl-tRNA(Glu) to glutamate 1-semialdehyde (GSA). The sequence is that of Glutamyl-tRNA reductase 2 from Anaeromyxobacter dehalogenans (strain 2CP-C).